The sequence spans 257 residues: Proteasome assembly chaperone 1 (257 aa).

The protein belongs to the PSMG1 family. In terms of assembly, forms a heterodimer with psmg2.

Functionally, chaperone protein which promotes assembly of the 20S proteasome as part of a heterodimer with psmg2. This is Proteasome assembly chaperone 1 (psmg1) from Nematostella vectensis (Starlet sea anemone).